The following is a 205-amino-acid chain: Holliday junction branch migration complex subunit RuvA (205 aa).

A domain I region spans residues M1–N67. A domain II region spans residues T68–V146. A flexible linker region spans residues A147–Y150. The domain III stretch occupies residues Y150–A205.

Belongs to the RuvA family. Homotetramer. Forms an RuvA(8)-RuvB(12)-Holliday junction (HJ) complex. HJ DNA is sandwiched between 2 RuvA tetramers; dsDNA enters through RuvA and exits via RuvB. An RuvB hexamer assembles on each DNA strand where it exits the tetramer. Each RuvB hexamer is contacted by two RuvA subunits (via domain III) on 2 adjacent RuvB subunits; this complex drives branch migration. In the full resolvosome a probable DNA-RuvA(4)-RuvB(12)-RuvC(2) complex forms which resolves the HJ.

The protein resides in the cytoplasm. Its function is as follows. The RuvA-RuvB-RuvC complex processes Holliday junction (HJ) DNA during genetic recombination and DNA repair, while the RuvA-RuvB complex plays an important role in the rescue of blocked DNA replication forks via replication fork reversal (RFR). RuvA specifically binds to HJ cruciform DNA, conferring on it an open structure. The RuvB hexamer acts as an ATP-dependent pump, pulling dsDNA into and through the RuvAB complex. HJ branch migration allows RuvC to scan DNA until it finds its consensus sequence, where it cleaves and resolves the cruciform DNA. This chain is Holliday junction branch migration complex subunit RuvA, found in Mycoplasma genitalium (strain ATCC 33530 / DSM 19775 / NCTC 10195 / G37) (Mycoplasmoides genitalium).